We begin with the raw amino-acid sequence, 783 residues long: DNA ligase (783 aa).

NAD(+) is bound by residues D42–D46, S91–L92, and E125. The active-site N6-AMP-lysine intermediate is the K127. The NAD(+) site is built by R148, E185, K302, and K326. The Zn(2+) site is built by C421, C423, C445, and C451. The 79-residue stretch at K705–G783 folds into the BRCT domain.

The protein belongs to the NAD-dependent DNA ligase family. LigA subfamily. It depends on Mg(2+) as a cofactor. Mn(2+) is required as a cofactor.

The enzyme catalyses NAD(+) + (deoxyribonucleotide)n-3'-hydroxyl + 5'-phospho-(deoxyribonucleotide)m = (deoxyribonucleotide)n+m + AMP + beta-nicotinamide D-nucleotide.. Functionally, DNA ligase that catalyzes the formation of phosphodiester linkages between 5'-phosphoryl and 3'-hydroxyl groups in double-stranded DNA using NAD as a coenzyme and as the energy source for the reaction. It is essential for DNA replication and repair of damaged DNA. This chain is DNA ligase, found in Caulobacter vibrioides (strain ATCC 19089 / CIP 103742 / CB 15) (Caulobacter crescentus).